Reading from the N-terminus, the 178-residue chain is MSRIGRLPITIPAGVDVTIDGDRVSVKGPKGPKGQLEHSLPTPITATLEEGQVTVARPDDERESRSLHGLTRTLISNMVEGVTNGFSKQLEVVGTGYRVQAKGQDLEFDLGYSHPVPVKVSQGITFTVEGNRVTVAGIDKQQQVGETAANIRKLRRPDPYKGKGVYAGEQIRRKAGKK.

Belongs to the universal ribosomal protein uL6 family. As to quaternary structure, part of the 50S ribosomal subunit.

Functionally, this protein binds to the 23S rRNA, and is important in its secondary structure. It is located near the subunit interface in the base of the L7/L12 stalk, and near the tRNA binding site of the peptidyltransferase center. This chain is Large ribosomal subunit protein uL6, found in Micrococcus luteus (Micrococcus lysodeikticus).